The sequence spans 155 residues: MKLLVVAVGQRMPDWAQTAWDDYAKRFPPELKLELRAVKTEPRGSKSLETLYAAERERIEGAIAKGMRIVVLDERGTALTTKALAARLQAWQGEGDDVALVIGGPDGLDPAFKAAAHERIRLSDLTLPHAMARVLLVEQLYRAWSVNAGHPYHRE.

Residues Leu-72, Gly-103, and Leu-122–Leu-127 each bind S-adenosyl-L-methionine.

Belongs to the RNA methyltransferase RlmH family. As to quaternary structure, homodimer.

It is found in the cytoplasm. It carries out the reaction pseudouridine(1915) in 23S rRNA + S-adenosyl-L-methionine = N(3)-methylpseudouridine(1915) in 23S rRNA + S-adenosyl-L-homocysteine + H(+). Specifically methylates the pseudouridine at position 1915 (m3Psi1915) in 23S rRNA. This Variovorax paradoxus (strain S110) protein is Ribosomal RNA large subunit methyltransferase H.